A 461-amino-acid polypeptide reads, in one-letter code: Na(+)/H(+) antiporter NhaA (461 aa).

Residues 1–23 (MILSTQRLGRFMSPAPTPAPDAK) form a disordered region. The next 12 membrane-spanning stretches (helical) occupy residues 48–68 (VGGA…NSPV), 89–109 (LSLG…LVGL), 127–147 (IVPV…YAAV), 157–177 (GWAI…AIIG), 186–206 (IFLL…IAFF), 211–231 (IQAA…FLAQ), 236–256 (FFGA…IVTW), 257–277 (ALVH…GFAV), 305–325 (ISAG…AVGG), 339–359 (IGII…TTWI), 374–394 (WIDV…SLLV), and 408–428 (HAKV…TVVL).

The protein belongs to the NhaA Na(+)/H(+) (TC 2.A.33) antiporter family.

The protein resides in the cell membrane. The enzyme catalyses Na(+)(in) + 2 H(+)(out) = Na(+)(out) + 2 H(+)(in). Its function is as follows. Na(+)/H(+) antiporter that extrudes sodium in exchange for external protons. This is Na(+)/H(+) antiporter NhaA from Arthrobacter sp. (strain FB24).